The chain runs to 205 residues: Urease accessory protein UreE (205 aa).

The span at 170 to 192 (EHHGHSHSHSHDHDHDHDHDHQH) shows a compositional bias: basic and acidic residues. The disordered stretch occupies residues 170 to 205 (EHHGHSHSHSHDHDHDHDHDHQHGPCCSHGHHHGHR).

This sequence belongs to the UreE family.

The protein resides in the cytoplasm. Its function is as follows. Involved in urease metallocenter assembly. Binds nickel. Probably functions as a nickel donor during metallocenter assembly. The sequence is that of Urease accessory protein UreE from Burkholderia pseudomallei (strain 668).